We begin with the raw amino-acid sequence, 376 residues long: MFPSVQINALNQLSGETKEIERHALFVGVGTTNQGKLLALTPDSDFDKVFGETDTDLKKQVRAAMLNAGQNWFAHVYIAQEDGYDFVECVKKANQTASFEYCVNTRYLGVDKASIGKLQECYAELLAKFGRRTFFIQAVQGINHDQSDGETWDQYVQKLTTLQQTIVADHVCLVPLLFGNETGVLAGRLANRAVTVADSPARVQTGALVSLGSANKPLDKDGNELTLAHLKSLETARYSVPMWYPDYDGYYRADGRTLDVEGGDYQVIENLRVVDKVARKVRLLAIGKIADRSFNSTTSSTEYHKNYFAKPLRDMSKSATINGKDFPGECMPPKDDAITIVWQSKTKVTIYIKVRPYDCPKEITANIFLDLDSLGE.

This chain is Putative tail sheath protein, found in Haemophilus influenzae (Bacteriophage HP1).